Here is a 138-residue protein sequence, read N- to C-terminus: Regulator of ribonuclease activity B (138 aa).

Residues 111–138 (WGTYFEDPNGEEGDDDDYVDEDDDGVRH) form a disordered region. A compositionally biased stretch (acidic residues) spans 118-138 (PNGEEGDDDDYVDEDDDGVRH).

This sequence belongs to the RraB family. In terms of assembly, interacts with the C-terminal region of Rne.

Its subcellular location is the cytoplasm. Globally modulates RNA abundance by binding to RNase E (Rne) and regulating its endonucleolytic activity. Can modulate Rne action in a substrate-dependent manner by altering the composition of the degradosome. The protein is Regulator of ribonuclease activity B of Salmonella typhi.